We begin with the raw amino-acid sequence, 288 residues long: Elongation factor Ts (288 aa).

Residues 82 to 85 (TDFV) are involved in Mg(2+) ion dislocation from EF-Tu.

This sequence belongs to the EF-Ts family.

The protein localises to the cytoplasm. Associates with the EF-Tu.GDP complex and induces the exchange of GDP to GTP. It remains bound to the aminoacyl-tRNA.EF-Tu.GTP complex up to the GTP hydrolysis stage on the ribosome. The protein is Elongation factor Ts of Chlorobium chlorochromatii (strain CaD3).